The chain runs to 245 residues: Heat shock transcription factor (245 aa).

Residues 17 to 115 (KSGFVNRLYR…LISLITRDKS (99 aa)) mediate DNA binding. The segment at 130–169 (SLQYLASCNYKQQKEINDLKDRIKTLETKYATLYEIISNA) is involved in trimerization.

It belongs to the HSF family. Homotrimer. Homotrimerization increases the affinity of HSF1 to DNA.

Its subcellular location is the nucleus. Its function is as follows. DNA-binding transcription factor that specifically binds heat shock promoter elements (HSE) and activates transcription. The protein is Heat shock transcription factor of Enterocytozoon bieneusi (strain H348) (Microsporidian parasite).